The primary structure comprises 63 residues: Large ribosomal subunit protein uL29 (63 aa).

It belongs to the universal ribosomal protein uL29 family.

This Alteromonas mediterranea (strain DSM 17117 / CIP 110805 / LMG 28347 / Deep ecotype) protein is Large ribosomal subunit protein uL29.